Consider the following 321-residue polypeptide: MTTQTVSGRRYFTKAWLMEQKSLIALLVLIAIVSTLSPNFFTINNLFNILQQTSVNAIMAVGMTLVILTSGIDLSVGSLLALTGAVAASIVGIEVNALVAVAAALALGAAIGAVTGVIVAKGRVQAFIATLVMMLLLRGVTMVYTNGSPVNTGFTENADLFGWFGIGRPLGVPTPVWIMGIVFLAAWYMLHHTRLGRYIYALGGNEAATRLSGINVNKIKIIVYSLCGLLASLAGIIEVARLSSAQPTAGTGYELDAIAAVVLGGTSLAGGKGRIVGTLIGALILGFLNNGLNLLGVSSYYQMIVKAVVILLAVLVDNKKQ.

Residues 1–22 (MTTQTVSGRRYFTKAWLMEQKS) lie on the Cytoplasmic side of the membrane. The chain crosses the membrane as a helical span at residues 23 to 43 (LIALLVLIAIVSTLSPNFFTI). At 44–56 (NNLFNILQQTSVN) the chain is on the periplasmic side. Residues 57 to 77 (AIMAVGMTLVILTSGIDLSVG) form a helical membrane-spanning segment. Residues 78–125 (SLLALTGAVAASIVGIEVNALVAVAAALALGAAIGAVTGVIVAKGRVQ) are Cytoplasmic-facing. A helical membrane pass occupies residues 126–145 (AFIATLVMMLLLRGVTMVYT). The Periplasmic segment spans residues 146-168 (NGSPVNTGFTENADLFGWFGIGR). A helical transmembrane segment spans residues 169-190 (PLGVPTPVWIMGIVFLAAWYML). The Cytoplasmic portion of the chain corresponds to 191-220 (HHTRLGRYIYALGGNEAATRLSGINVNKIK). Residues 221–240 (IIVYSLCGLLASLAGIIEVA) form a helical membrane-spanning segment. Topologically, residues 241–294 (RLSSAQPTAGTGYELDAIAAVVLGGTSLAGGKGRIVGTLIGALILGFLNNGLNL) are periplasmic. Residues 295-316 (LGVSSYYQMIVKAVVILLAVLV) form a helical membrane-spanning segment. Residues 317 to 321 (DNKKQ) are Cytoplasmic-facing.

Belongs to the binding-protein-dependent transport system permease family. AraH/RbsC subfamily. As to quaternary structure, the complex is composed of an ATP-binding protein (RbsA), two transmembrane proteins (RbsC) and a solute-binding protein (RbsB).

The protein localises to the cell inner membrane. In terms of biological role, part of the ABC transporter complex RbsABC involved in ribose import. Probably responsible for the translocation of the substrate across the membrane. The polypeptide is Ribose import permease protein RbsC (rbsC) (Escherichia coli O157:H7).